Reading from the N-terminus, the 142-residue chain is uncharacterized protein (142 aa).

This is an uncharacterized protein from Invertebrate iridescent virus 3 (IIV-3).